Consider the following 603-residue polypeptide: Mono(2-hydroxyethyl) terephthalate hydrolase (603 aa).

A signal peptide spans 1-17; that stretch reads MQTTVTTMLLASVALAA. Cys-18 carries the N-palmitoyl cysteine lipid modification. Cys-18 carries the S-diacylglycerol cysteine lipid modification. A disordered region spans residues 24–44; it reads TPLPLPQQQPPQQEPPPPPVP. Pro residues predominate over residues 26–44; sequence LPLPQQQPPQQEPPPPPVP. Cys-51 and Cys-92 form a disulfide bridge. Residue Gly-132 participates in 4-[(2-hydroxyethoxy)carbonyl]benzoate binding. Cystine bridges form between Cys-224/Cys-529, Cys-303/Cys-320, Cys-340/Cys-348, and Cys-577/Cys-599. Ser-225 serves as the catalytic Acyl-ester intermediate. Glu-226 is a 4-[(2-hydroxyethoxy)carbonyl]benzoate binding site. 5 residues coordinate Ca(2+): Asp-304, Asp-307, Leu-309, Asp-311, and Ile-313. Arg-411 and Ser-416 together coordinate 4-[(2-hydroxyethoxy)carbonyl]benzoate. Catalysis depends on charge relay system residues Asp-492 and His-528. Residue His-528 coordinates 4-[(2-hydroxyethoxy)carbonyl]benzoate.

Belongs to the tannase family.

It is found in the cell outer membrane. It carries out the reaction 4-[(2-hydroxyethoxy)carbonyl]benzoate + H2O = terephthalate + ethylene glycol + H(+). Functionally, involved in the degradation and assimilation of the plastic poly(ethylene terephthalate) (PET), which allows I.sakaiensis to use PET as its major energy and carbon source for growth. Likely acts synergistically with PETase to depolymerize PET. Catalyzes the hydrolysis of mono(2-hydroxyethyl) terephthalate (MHET) into its two environmentally benign monomers, terephthalate and ethylene glycol. Does not show activity against PET, bis(hydroxyethyl) terephthalate (BHET), pNP-aliphatic esters or typical aromatic ester compounds catalyzed by the tannase family enzymes, such as ethyl gallate and ethyl ferulate. The sequence is that of Mono(2-hydroxyethyl) terephthalate hydrolase from Piscinibacter sakaiensis (Ideonella sakaiensis).